Reading from the N-terminus, the 291-residue chain is ATP synthase gamma chain (291 aa).

It belongs to the ATPase gamma chain family. In terms of assembly, F-type ATPases have 2 components, CF(1) - the catalytic core - and CF(0) - the membrane proton channel. CF(1) has five subunits: alpha(3), beta(3), gamma(1), delta(1), epsilon(1). CF(0) has three main subunits: a, b and c.

It is found in the cell membrane. Functionally, produces ATP from ADP in the presence of a proton gradient across the membrane. The gamma chain is believed to be important in regulating ATPase activity and the flow of protons through the CF(0) complex. The protein is ATP synthase gamma chain of Lachnoclostridium phytofermentans (strain ATCC 700394 / DSM 18823 / ISDg) (Clostridium phytofermentans).